Consider the following 187-residue polypeptide: dCTP deaminase, dUMP-forming (187 aa).

DCTP is bound by residues 99–104, Asp117, 125–127, Gln146, Tyr159, Lys166, and Gln170; these read KSSIAR and TLE. Glu127 (proton donor/acceptor) is an active-site residue.

The protein belongs to the dCTP deaminase family. In terms of assembly, homotrimer.

It catalyses the reaction dCTP + 2 H2O = dUMP + NH4(+) + diphosphate. It functions in the pathway pyrimidine metabolism; dUMP biosynthesis; dUMP from dCTP: step 1/1. In terms of biological role, bifunctional enzyme that catalyzes both the deamination of dCTP to dUTP and the hydrolysis of dUTP to dUMP without releasing the toxic dUTP intermediate. This Methanoculleus marisnigri (strain ATCC 35101 / DSM 1498 / JR1) protein is dCTP deaminase, dUMP-forming.